We begin with the raw amino-acid sequence, 320 residues long: Malate dehydrogenase (320 aa).

Residues 10–15 and aspartate 34 each bind NAD(+); that span reads GSGMIG. Residues arginine 83 and arginine 89 each coordinate substrate. NAD(+) is bound by residues asparagine 96 and 119–121; that span reads ITN. Asparagine 121 and arginine 152 together coordinate substrate. Residue histidine 176 is the Proton acceptor of the active site.

It belongs to the LDH/MDH superfamily. MDH type 3 family.

The catalysed reaction is (S)-malate + NAD(+) = oxaloacetate + NADH + H(+). In terms of biological role, catalyzes the reversible oxidation of malate to oxaloacetate. This is Malate dehydrogenase from Maricaulis maris (strain MCS10) (Caulobacter maris).